Reading from the N-terminus, the 416-residue chain is Glutamyl-tRNA reductase (416 aa).

Substrate is bound by residues 49-52 (TCNR), S105, 110-112 (ETQ), and Q116. C50 functions as the Nucleophile in the catalytic mechanism. Residue 185 to 190 (GAGEMI) coordinates NADP(+).

It belongs to the glutamyl-tRNA reductase family. Homodimer.

It catalyses the reaction (S)-4-amino-5-oxopentanoate + tRNA(Glu) + NADP(+) = L-glutamyl-tRNA(Glu) + NADPH + H(+). It participates in porphyrin-containing compound metabolism; protoporphyrin-IX biosynthesis; 5-aminolevulinate from L-glutamyl-tRNA(Glu): step 1/2. Functionally, catalyzes the NADPH-dependent reduction of glutamyl-tRNA(Glu) to glutamate 1-semialdehyde (GSA). The polypeptide is Glutamyl-tRNA reductase (Thiobacillus denitrificans (strain ATCC 25259 / T1)).